The following is a 229-amino-acid chain: MVIFGLSRRIKRCTKNPIIAELKVYSPKYGDLLRGRDPLEILRRYERAGAVGISYITDPKYFRGNFDFFKRLCKETELPVLRKDFITTKEEIEKTAEAGGSAVLLITRLLKDKLPEFVDHAREHGLDTLVEVHTLEELKIAIQTNSTMIGINNRDIGKLELDDGNVSLTAKLAPLIPDKFVKVSESGITTLEDLKVALKYADAALIGTALMKTEDPEKLLKSFVEAKIC.

This sequence belongs to the TrpC family.

It carries out the reaction 1-(2-carboxyphenylamino)-1-deoxy-D-ribulose 5-phosphate + H(+) = (1S,2R)-1-C-(indol-3-yl)glycerol 3-phosphate + CO2 + H2O. It participates in amino-acid biosynthesis; L-tryptophan biosynthesis; L-tryptophan from chorismate: step 4/5. This chain is Indole-3-glycerol phosphate synthase, found in Pyrococcus abyssi (strain GE5 / Orsay).